The sequence spans 300 residues: Protease HtpX homolog (300 aa).

2 helical membrane-spanning segments follow: residues 7 to 24 (GILMAVMTALFLGVGALI) and 29 to 46 (GAIIALVIAAGMNLFTFW). Residue histidine 130 participates in Zn(2+) binding. The active site involves glutamate 131. Histidine 134 contributes to the Zn(2+) binding site. 2 consecutive transmembrane segments (helical) span residues 145-165 (VTATFAGAISMLANFAFFFGG) and 174-194 (PMGLVGTLALMFLAPLAAGLV). Zn(2+) is bound at residue glutamate 203.

It belongs to the peptidase M48B family. It depends on Zn(2+) as a cofactor.

The protein resides in the cell inner membrane. This Cereibacter sphaeroides (strain ATCC 17029 / ATH 2.4.9) (Rhodobacter sphaeroides) protein is Protease HtpX homolog.